Reading from the N-terminus, the 656-residue chain is FAST kinase domain-containing protein 3, mitochondrial (656 aa).

Positions 587–645 constitute an RAP domain; it reads VALCIDGPQRFCLGSKHLLGKEAIKQRHLRLLGYQVVQVPYHELELLTSRLELVDYLQR.

This sequence belongs to the FAST kinase family.

Its subcellular location is the mitochondrion. Required for normal mitochondrial respiration. Increases steady-state levels and half-lives of a subset of mature mitochondrial mRNAs MT-ND2, MT-ND3, MT-CYTB, MT-CO2, and MT-ATP8/6. Promotes MT-CO1 mRNA translation and increases mitochondrial complex IV assembly and activity. The polypeptide is FAST kinase domain-containing protein 3, mitochondrial (Fastkd3) (Rattus norvegicus (Rat)).